Consider the following 59-residue polypeptide: MLNIFSLICLNSDLYSSRFFLAKLPEAYAFLNPIVDVMPVIPLFFLLLAFVWQAAVSFR.

The propeptide occupies 1-22 (MLNIFSLICLNSDLYSSRFFLA). Residues 38 to 58 (MPVIPLFFLLLAFVWQAAVSF) traverse the membrane as a helical segment.

The protein belongs to the PsbK family. As to quaternary structure, PSII is composed of 1 copy each of membrane proteins PsbA, PsbB, PsbC, PsbD, PsbE, PsbF, PsbH, PsbI, PsbJ, PsbK, PsbL, PsbM, PsbT, PsbX, PsbY, PsbZ, Psb30/Ycf12, at least 3 peripheral proteins of the oxygen-evolving complex and a large number of cofactors. It forms dimeric complexes.

Its subcellular location is the plastid. It is found in the chloroplast thylakoid membrane. Functionally, one of the components of the core complex of photosystem II (PSII). PSII is a light-driven water:plastoquinone oxidoreductase that uses light energy to abstract electrons from H(2)O, generating O(2) and a proton gradient subsequently used for ATP formation. It consists of a core antenna complex that captures photons, and an electron transfer chain that converts photonic excitation into a charge separation. The polypeptide is Photosystem II reaction center protein K (Oenothera elata subsp. hookeri (Hooker's evening primrose)).